A 274-amino-acid chain; its full sequence is Pantothenate synthetase (274 aa).

Position 27-34 (27-34 (MGALHKGH)) interacts with ATP. Catalysis depends on histidine 34, which acts as the Proton donor. Glutamine 58 is a binding site for (R)-pantoate. Glutamine 58 contributes to the beta-alanine binding site. 145 to 148 (GQKD) is an ATP binding site. Glutamine 151 contributes to the (R)-pantoate binding site. 182–185 (LSSR) is an ATP binding site.

Belongs to the pantothenate synthetase family. Homodimer.

The protein localises to the cytoplasm. It catalyses the reaction (R)-pantoate + beta-alanine + ATP = (R)-pantothenate + AMP + diphosphate + H(+). It participates in cofactor biosynthesis; (R)-pantothenate biosynthesis; (R)-pantothenate from (R)-pantoate and beta-alanine: step 1/1. Functionally, catalyzes the condensation of pantoate with beta-alanine in an ATP-dependent reaction via a pantoyl-adenylate intermediate. The chain is Pantothenate synthetase from Wolinella succinogenes (strain ATCC 29543 / DSM 1740 / CCUG 13145 / JCM 31913 / LMG 7466 / NCTC 11488 / FDC 602W) (Vibrio succinogenes).